A 222-amino-acid chain; its full sequence is Ribonuclease 3 (222 aa).

Residues 3 to 125 (SQSVAKKLNH…LFGAIYLDAG (123 aa)) enclose the RNase III domain. E38 serves as a coordination point for Mg(2+). The active site involves D42. Mg(2+) is bound by residues D111 and E114. Residue E114 is part of the active site. A DRBM domain is found at 152–222 (DAKTRLQEWL…AEKALKELLA (71 aa)).

The protein belongs to the ribonuclease III family. Homodimer. Mg(2+) serves as cofactor.

The protein resides in the cytoplasm. The enzyme catalyses Endonucleolytic cleavage to 5'-phosphomonoester.. Its function is as follows. Digests double-stranded RNA. Involved in the processing of primary rRNA transcript to yield the immediate precursors to the large and small rRNAs (23S and 16S). Processes some mRNAs, and tRNAs when they are encoded in the rRNA operon. Processes pre-crRNA and tracrRNA of type II CRISPR loci if present in the organism. This is Ribonuclease 3 from Dechloromonas aromatica (strain RCB).